Reading from the N-terminus, the 460-residue chain is MKGKIVAIIGPVVDVSFMDELPNINDALEVRLSETETRTLEVASHLGNHMVRTISLEATDGLARGMEVIGTLSPIKVPVGKKVLGRMLNVLGKPMDGLDEVDTKRYMPIHKLPPDFHDLGGETEILETGIKVIDLIAPYIKGGKIGLFGGAGVGKTVLIQEMIHNVAKNHGGISVFTGVGERVREGHELYHEMKDSGVLDKTALVFGQMNEPPGARLRVALTGLTLAEYFRDGEKQNVLLFIDNIYRYIQAGSEISALLGRMPSAVGYQPTLATEMGKLQERITSTRYGSITSIQAVYVPADDYTDPAPATVFSHLDATTALSRKLTEDGIYPAIDPLGSTSRALTPSVVGQEHYDTAREVQRMLQRYHELLDIIAILGMDELSDDDKLVVHRARRIQNFLSQNMHVAERFTGQTGSFVPIRETIRGFKEILQGKHDDLPEEAFLLVGTIDDAIAKAKKL.

Residue glycine 149–threonine 156 participates in ATP binding.

This sequence belongs to the ATPase alpha/beta chains family. In terms of assembly, F-type ATPases have 2 components, CF(1) - the catalytic core - and CF(0) - the membrane proton channel. CF(1) has five subunits: alpha(3), beta(3), gamma(1), delta(1), epsilon(1). CF(0) has three main subunits: a(1), b(2) and c(9-12). The alpha and beta chains form an alternating ring which encloses part of the gamma chain. CF(1) is attached to CF(0) by a central stalk formed by the gamma and epsilon chains, while a peripheral stalk is formed by the delta and b chains.

The protein localises to the cell membrane. It carries out the reaction ATP + H2O + 4 H(+)(in) = ADP + phosphate + 5 H(+)(out). In terms of biological role, produces ATP from ADP in the presence of a proton gradient across the membrane. The catalytic sites are hosted primarily by the beta subunits. This is ATP synthase subunit beta from Acholeplasma laidlawii (strain PG-8A).